Reading from the N-terminus, the 886-residue chain is Pyruvate dehydrogenase E1 component (886 aa).

In terms of assembly, homodimer. Part of the PDH complex, consisting of multiple copies of pyruvate dehydrogenase (E1), dihydrolipoamide acetyltransferase (E2) and lipoamide dehydrogenase (E3). Requires thiamine diphosphate as cofactor.

The enzyme catalyses N(6)-[(R)-lipoyl]-L-lysyl-[protein] + pyruvate + H(+) = N(6)-[(R)-S(8)-acetyldihydrolipoyl]-L-lysyl-[protein] + CO2. Component of the pyruvate dehydrogenase (PDH) complex, that catalyzes the overall conversion of pyruvate to acetyl-CoA and CO(2). This Haemophilus influenzae (strain ATCC 51907 / DSM 11121 / KW20 / Rd) protein is Pyruvate dehydrogenase E1 component (aceE).